The following is an 89-amino-acid chain: Small ribosomal subunit protein uS15 (89 aa).

It belongs to the universal ribosomal protein uS15 family. Part of the 30S ribosomal subunit. Forms a bridge to the 50S subunit in the 70S ribosome, contacting the 23S rRNA.

One of the primary rRNA binding proteins, it binds directly to 16S rRNA where it helps nucleate assembly of the platform of the 30S subunit by binding and bridging several RNA helices of the 16S rRNA. In terms of biological role, forms an intersubunit bridge (bridge B4) with the 23S rRNA of the 50S subunit in the ribosome. The chain is Small ribosomal subunit protein uS15 from Corynebacterium kroppenstedtii (strain DSM 44385 / JCM 11950 / CIP 105744 / CCUG 35717).